Reading from the N-terminus, the 206-residue chain is MRYIVALTGGIGSGKSTVANAFADLGINVIDADIIARQVVEPGAPALHAIADHFGANMIAADGTLQRRALRERIFANPEEKNWLNALLHPLIQQETQHQIQQATSPYVLWVVPLLVENSLYKKANRVLVVDVSPETQLKRTMQRDDVTREHVEQILAAQATREARLAVADDVIDNNGAPDAIASDVARLHAHYLQLASQFVSQEKP.

In terms of domain architecture, DPCK spans isoleucine 4–phenylalanine 200. Residue glycine 12–threonine 17 participates in ATP binding.

Belongs to the CoaE family.

The protein resides in the cytoplasm. It carries out the reaction 3'-dephospho-CoA + ATP = ADP + CoA + H(+). It functions in the pathway cofactor biosynthesis; coenzyme A biosynthesis; CoA from (R)-pantothenate: step 5/5. Its function is as follows. Catalyzes the phosphorylation of the 3'-hydroxyl group of dephosphocoenzyme A to form coenzyme A. In Shigella boydii serotype 4 (strain Sb227), this protein is Dephospho-CoA kinase.